A 197-amino-acid chain; its full sequence is Imidazoleglycerol-phosphate dehydratase (197 aa).

This sequence belongs to the imidazoleglycerol-phosphate dehydratase family.

The protein localises to the cytoplasm. It catalyses the reaction D-erythro-1-(imidazol-4-yl)glycerol 3-phosphate = 3-(imidazol-4-yl)-2-oxopropyl phosphate + H2O. The protein operates within amino-acid biosynthesis; L-histidine biosynthesis; L-histidine from 5-phospho-alpha-D-ribose 1-diphosphate: step 6/9. This chain is Imidazoleglycerol-phosphate dehydratase, found in Rhodopseudomonas palustris (strain HaA2).